The following is a 316-amino-acid chain: Transaldolase (316 aa).

Lys-132 serves as the catalytic Schiff-base intermediate with substrate.

The protein belongs to the transaldolase family. Type 1 subfamily. As to quaternary structure, homodimer.

It localises to the cytoplasm. It catalyses the reaction D-sedoheptulose 7-phosphate + D-glyceraldehyde 3-phosphate = D-erythrose 4-phosphate + beta-D-fructose 6-phosphate. The protein operates within carbohydrate degradation; pentose phosphate pathway; D-glyceraldehyde 3-phosphate and beta-D-fructose 6-phosphate from D-ribose 5-phosphate and D-xylulose 5-phosphate (non-oxidative stage): step 2/3. Its function is as follows. Transaldolase is important for the balance of metabolites in the pentose-phosphate pathway. The protein is Transaldolase of Aeromonas salmonicida (strain A449).